Here is a 287-residue protein sequence, read N- to C-terminus: Large ribosomal subunit protein uL2 (287 aa).

The interval 221–287 (RGSVMNPCDH…SKRSRGGRDS (67 aa)) is disordered. The segment covering 258 to 287 (KTRKRNKPSNKFVLRKRRKTSKRSRGGRDS) has biased composition (basic residues).

The protein belongs to the universal ribosomal protein uL2 family. Part of the 50S ribosomal subunit. Forms a bridge to the 30S subunit in the 70S ribosome.

Its function is as follows. One of the primary rRNA binding proteins. Required for association of the 30S and 50S subunits to form the 70S ribosome, for tRNA binding and peptide bond formation. It has been suggested to have peptidyltransferase activity; this is somewhat controversial. Makes several contacts with the 16S rRNA in the 70S ribosome. The protein is Large ribosomal subunit protein uL2 of Synechococcus sp. (strain WH7803).